The following is a 507-amino-acid chain: Maturase K (507 aa).

The protein belongs to the intron maturase 2 family. MatK subfamily.

Its subcellular location is the plastid. The protein resides in the chloroplast. Its function is as follows. Usually encoded in the trnK tRNA gene intron. Probably assists in splicing its own and other chloroplast group II introns. This Fagopyrum esculentum (Common buckwheat) protein is Maturase K.